The following is a 152-amino-acid chain: UPF0266 membrane protein YobD (152 aa).

Helical transmembrane passes span 6–26, 45–65, and 67–87; these read LVLILFIAALLAYALYDQFIM, VDSVIFVGLVAILIYNNVTSH, and AQMTTWLLSALALMGFYIFWI.

Belongs to the UPF0266 family.

It localises to the cell inner membrane. The protein is UPF0266 membrane protein YobD of Salmonella enteritidis PT4 (strain P125109).